Consider the following 450-residue polypeptide: tRNA modification GTPase MnmE (450 aa).

(6S)-5-formyl-5,6,7,8-tetrahydrofolate contacts are provided by arginine 23, glutamate 79, and lysine 118. Positions glycine 214–glycine 374 constitute a TrmE-type G domain. Residue asparagine 224 participates in K(+) binding. GTP-binding positions include asparagine 224–serine 229, threonine 243–threonine 249, and aspartate 268–glycine 271. Position 228 (serine 228) interacts with Mg(2+). K(+) contacts are provided by threonine 243, isoleucine 245, and threonine 248. Threonine 249 is a binding site for Mg(2+). Lysine 450 contacts (6S)-5-formyl-5,6,7,8-tetrahydrofolate.

The protein belongs to the TRAFAC class TrmE-Era-EngA-EngB-Septin-like GTPase superfamily. TrmE GTPase family. Homodimer. Heterotetramer of two MnmE and two MnmG subunits. The cofactor is K(+).

The protein localises to the cytoplasm. Exhibits a very high intrinsic GTPase hydrolysis rate. Involved in the addition of a carboxymethylaminomethyl (cmnm) group at the wobble position (U34) of certain tRNAs, forming tRNA-cmnm(5)s(2)U34. In Francisella tularensis subsp. novicida (strain U112), this protein is tRNA modification GTPase MnmE.